We begin with the raw amino-acid sequence, 170 residues long: Flavin reductase (170 aa).

NAD(+)-binding positions include serine 51, histidine 138, and 159–162 (FYRG).

This sequence belongs to the non-flavoprotein flavin reductase family. As to quaternary structure, homodimer. Likely forms a loose transient complex with monooxygenases for which it provides FMNH(2).

The enzyme catalyses FMNH2 + NAD(+) = FMN + NADH + 2 H(+). It carries out the reaction FADH2 + NAD(+) = FAD + NADH + 2 H(+). Catalyzes the reduction of FMN, and to a lesser extent, FAD, using NADH as an electron donor. Is able to provide the FMNH(2) required for the Baeyer-Villiger oxidations catalyzed by 2,5-diketocamphane monooxygenases and 3,6-diketocamphane monooxygenase. NADPH acts as a very poor cosubstrate. The sequence is that of Flavin reductase from Pseudomonas putida (Arthrobacter siderocapsulatus).